The sequence spans 153 residues: Lipoprotein signal peptidase (153 aa).

Transmembrane regions (helical) follow at residues 61–81 (YFFV…LVKN) and 85–105 (SLWL…NFID). Catalysis depends on residues aspartate 114 and aspartate 130. Residues 125 to 145 (IFNVADSYLTVGVLLLILILW) form a helical membrane-spanning segment.

This sequence belongs to the peptidase A8 family.

The protein resides in the cell membrane. The catalysed reaction is Release of signal peptides from bacterial membrane prolipoproteins. Hydrolyzes -Xaa-Yaa-Zaa-|-(S,diacylglyceryl)Cys-, in which Xaa is hydrophobic (preferably Leu), and Yaa (Ala or Ser) and Zaa (Gly or Ala) have small, neutral side chains.. It functions in the pathway protein modification; lipoprotein biosynthesis (signal peptide cleavage). Functionally, this protein specifically catalyzes the removal of signal peptides from prolipoproteins. The protein is Lipoprotein signal peptidase of Streptococcus thermophilus (strain CNRZ 1066).